Here is a 496-residue protein sequence, read N- to C-terminus: Glutamyl-tRNA(Gln) amidotransferase subunit A (496 aa).

Active-site charge relay system residues include K75 and S150. S174 functions as the Acyl-ester intermediate in the catalytic mechanism.

It belongs to the amidase family. GatA subfamily. Heterotrimer of A, B and C subunits.

It carries out the reaction L-glutamyl-tRNA(Gln) + L-glutamine + ATP + H2O = L-glutaminyl-tRNA(Gln) + L-glutamate + ADP + phosphate + H(+). Its function is as follows. Allows the formation of correctly charged Gln-tRNA(Gln) through the transamidation of misacylated Glu-tRNA(Gln) in organisms which lack glutaminyl-tRNA synthetase. The reaction takes place in the presence of glutamine and ATP through an activated gamma-phospho-Glu-tRNA(Gln). This is Glutamyl-tRNA(Gln) amidotransferase subunit A from Burkholderia thailandensis (strain ATCC 700388 / DSM 13276 / CCUG 48851 / CIP 106301 / E264).